The chain runs to 113 residues: Putative pterin-4-alpha-carbinolamine dehydratase (113 aa).

Belongs to the pterin-4-alpha-carbinolamine dehydratase family.

The catalysed reaction is (4aS,6R)-4a-hydroxy-L-erythro-5,6,7,8-tetrahydrobiopterin = (6R)-L-erythro-6,7-dihydrobiopterin + H2O. This chain is Putative pterin-4-alpha-carbinolamine dehydratase, found in Saccharophagus degradans (strain 2-40 / ATCC 43961 / DSM 17024).